The primary structure comprises 1014 residues: 2-oxoglutarate dehydrogenase, mitochondrial (1014 aa).

A mitochondrion-targeting transit peptide spans Met-1–Lys-30. 4 residues coordinate thiamine diphosphate: Arg-306, Asp-406, Asn-439, and Ile-441. Mg(2+) is bound by residues Asp-406, Asn-439, and Ile-441.

This sequence belongs to the alpha-ketoglutarate dehydrogenase family. As to quaternary structure, component of the 2-oxoglutarate dehydrogenase complex (OGDC), also called alpha-ketoglutarate dehydrogenase (KGDH) complex. The copmplex is composed of the catalytic subunits OGDH (2-oxoglutarate dehydrogenase KGD1; also called E1 subunit), DLST (dihydrolipoamide succinyltransferase KGD2; also called E2 subunit) and DLD (dihydrolipoamide dehydrogenase LPD1; also called E3 subunit), and the assembly factor KGD4. The cofactor is thiamine diphosphate. Mg(2+) serves as cofactor.

It is found in the mitochondrion. The protein resides in the mitochondrion matrix. The protein localises to the mitochondrion nucleoid. It carries out the reaction N(6)-[(R)-lipoyl]-L-lysyl-[protein] + 2-oxoglutarate + H(+) = N(6)-[(R)-S(8)-succinyldihydrolipoyl]-L-lysyl-[protein] + CO2. Catabolite repressed. In terms of biological role, the 2-oxoglutarate dehydrogenase complex catalyzes the overall conversion of 2-oxoglutarate to succinyl-CoA and CO(2). It contains multiple copies of three enzymatic components: 2-oxoglutarate dehydrogenase (E1), dihydrolipoamide succinyltransferase (E2) and lipoamide dehydrogenase (E3). The chain is 2-oxoglutarate dehydrogenase, mitochondrial (KGD1) from Saccharomyces cerevisiae (strain ATCC 204508 / S288c) (Baker's yeast).